The primary structure comprises 1020 residues: Protein translocase subunit SecA (1020 aa).

ATP is bound by residues Gln-99, 117–121 (GEGKT), and Asp-633. The interval 963–992 (NEQPSQEMAADEETQEESKIEENKPEPIVV) is disordered. The segment covering 978–987 (EESKIEENKP) has biased composition (basic and acidic residues). Zn(2+)-binding residues include Cys-1002, Cys-1004, Cys-1013, and Cys-1014.

Belongs to the SecA family. In terms of assembly, monomer and homodimer. Part of the essential Sec protein translocation apparatus which comprises SecA, SecYEG and auxiliary proteins SecDF. Other proteins may also be involved. The cofactor is Zn(2+).

Its subcellular location is the cell inner membrane. It is found in the cytoplasm. The catalysed reaction is ATP + H2O + cellular proteinSide 1 = ADP + phosphate + cellular proteinSide 2.. Its function is as follows. Part of the Sec protein translocase complex. Interacts with the SecYEG preprotein conducting channel. Has a central role in coupling the hydrolysis of ATP to the transfer of proteins into and across the cell membrane, serving as an ATP-driven molecular motor driving the stepwise translocation of polypeptide chains across the membrane. This chain is Protein translocase subunit SecA, found in Protochlamydia amoebophila (strain UWE25).